A 310-amino-acid polypeptide reads, in one-letter code: GTP-binding protein GTR1 (310 aa).

GTP-binding residues include Ser-15, Gly-18, Lys-19, Ser-20, Ser-21, Thr-35, Thr-41, Gly-64, His-126, Asp-129, and Ile-166.

It belongs to the GTR/RAG GTP-binding protein family. As to quaternary structure, heterodimer; with GTR2. Component of the GSE complex composed of GTR1, GTR2, SLM4, MEH1 and LTV1. Interacts with GTR2; the interaction is direct. Interacts with TOR1.

It localises to the vacuole membrane. It carries out the reaction GTP + H2O = GDP + phosphate + H(+). In terms of biological role, GTPase involved in activation of the TORC1 signaling pathway, which promotes growth and represses autophagy in nutrient-rich conditions. Also required for TORC1 inactivation during nitrogen starvation. Required for intracellular sorting of GAP1 out of the endosome. Functionally associated with the inorganic phosphate transporter PHO84, and may be involved in regulating its function or localization. This is GTP-binding protein GTR1 (GTR1) from Saccharomyces cerevisiae (strain ATCC 204508 / S288c) (Baker's yeast).